The chain runs to 645 residues: Threonine--tRNA ligase (645 aa).

In terms of domain architecture, TGS spans 3-64 (DMINITFPDG…EQDGTITIVT (62 aa)). A catalytic region spans residues 247 to 544 (DHRKLGKELG…LLEEYKGAFP (298 aa)). The Zn(2+) site is built by Cys340, His391, and His521.

Belongs to the class-II aminoacyl-tRNA synthetase family. In terms of assembly, homodimer. Requires Zn(2+) as cofactor.

The protein localises to the cytoplasm. The enzyme catalyses tRNA(Thr) + L-threonine + ATP = L-threonyl-tRNA(Thr) + AMP + diphosphate + H(+). Functionally, catalyzes the attachment of threonine to tRNA(Thr) in a two-step reaction: L-threonine is first activated by ATP to form Thr-AMP and then transferred to the acceptor end of tRNA(Thr). Also edits incorrectly charged L-seryl-tRNA(Thr). In Halalkalibacterium halodurans (strain ATCC BAA-125 / DSM 18197 / FERM 7344 / JCM 9153 / C-125) (Bacillus halodurans), this protein is Threonine--tRNA ligase.